The following is a 573-amino-acid chain: Sulfate adenylyltransferase (573 aa).

The tract at residues 1 to 169 is N-terminal; that stretch reads MSNPPHGGVL…LEAVNKLQHY (169 aa). The segment at 170 to 394 is catalytic; the sequence is DFVDLRYSPA…LRESHPPRSQ (225 aa). Glutamine 197 serves as a coordination point for sulfate. Residues 197–200 and 291–294 contribute to the ATP site; these read QTRN and GRDH. Catalysis depends on residues threonine 198, arginine 199, and asparagine 200. Residue arginine 199 participates in sulfate binding. Alanine 295 contacts sulfate. ATP is bound at residue methionine 333. Residues 395–573 are allosteric regulation domain; adenylyl-sulfate kinase-like; it reads QGFTVLFTGY…LESQGLLDRF (179 aa). 3'-phosphoadenylyl sulfate-binding positions include 434 to 437, arginine 451, 477 to 478, and arginine 515; these read ENIR and IA.

In the N-terminal section; belongs to the sulfate adenylyltransferase family. The protein in the C-terminal section; belongs to the APS kinase family. As to quaternary structure, homohexamer. Dimer of trimers.

Its subcellular location is the cytoplasm. It carries out the reaction sulfate + ATP + H(+) = adenosine 5'-phosphosulfate + diphosphate. It functions in the pathway sulfur metabolism; hydrogen sulfide biosynthesis; sulfite from sulfate: step 1/3. Its activity is regulated as follows. Allosterically inhibited by 3'-phosphoadenosine 5'-phosphosulfate (PAPS). Catalyzes the first intracellular reaction of sulfate assimilation, forming adenosine-5'-phosphosulfate (APS) from inorganic sulfate and ATP. Plays an important role in sulfate activation as a component of the biosynthesis pathway of sulfur-containing amino acids. The protein is Sulfate adenylyltransferase (cys-11) of Neurospora crassa (strain ATCC 24698 / 74-OR23-1A / CBS 708.71 / DSM 1257 / FGSC 987).